We begin with the raw amino-acid sequence, 122 residues long: Antitoxin protein TsiV3 (122 aa).

The first 24 residues, 1–24 (MNNLLSAYVTMLLILLSISGGAIA), serve as a signal peptide directing secretion. Disulfide bonds link C28–C41 and C82–C100.

As to quaternary structure, homodimer; dimerization is critical for inhibitory activity. Forms a heterotetramer with VgrG3 composed of one TsiV3 homodimer and two VgrG3 molecules.

In terms of biological role, immunity protein that plays a role in preventing early activation of toxin VgrG3. The sequence is that of Antitoxin protein TsiV3 from Vibrio cholerae serotype O1 (strain ATCC 39315 / El Tor Inaba N16961).